Reading from the N-terminus, the 189-residue chain is MAPAWSFLLSLLLLSCNAICSLGCHLPHTHSLANRRVLMLLQQLRRVSPSSCLQDRNDFEFLQEALGGSQLQKAQAISVLHEVTQHTFQLFSTEGSPATWDKSLLDKLRAALDQQLTDLQACLTQEEGLRGAPLLKEDSSLAVRKYFHRLTLYLQEKRHSPCAWEVVRAEVMRAFSSSTNLQESFRRKD.

A signal peptide spans 1 to 23; it reads MAPAWSFLLSLLLLSCNAICSLG. Intrachain disulfides connect cysteine 24/cysteine 122 and cysteine 52/cysteine 162.

Belongs to the alpha/beta interferon family.

The protein resides in the secreted. Functionally, produced by macrophages, IFN-alpha have antiviral activities. Interferon stimulates the production of two enzymes: a protein kinase and an oligoadenylate synthetase. This Bos taurus (Bovine) protein is Interferon alpha-A (IFNAA).